The following is a 426-amino-acid chain: FK506-binding protein 3 (426 aa).

Disordered stretches follow at residues Ser37–Gln143 and Thr171–Lys314. 3 stretches are compositionally biased toward acidic residues: residues Asp65–Glu94, Glu111–Ser131, and Gln181–Glu225. 3 stretches are compositionally biased toward basic and acidic residues: residues Gly226–Ser257, Lys264–Glu278, and Val287–Lys311. One can recognise a PPIase FKBP-type domain in the interval Gly340–Lys426.

The protein belongs to the FKBP-type PPIase family. FKBP3/4 subfamily.

It is found in the nucleus. The protein localises to the nucleolus. It catalyses the reaction [protein]-peptidylproline (omega=180) = [protein]-peptidylproline (omega=0). Its activity is regulated as follows. Inhibited by both FK506 and rapamycin. PPIases accelerate the folding of proteins. It catalyzes the cis-trans isomerization of proline imidic peptide bonds in oligopeptides. This chain is FK506-binding protein 3 (FPR3), found in Candida albicans (strain SC5314 / ATCC MYA-2876) (Yeast).